Here is a 360-residue protein sequence, read N- to C-terminus: Phospho-N-acetylmuramoyl-pentapeptide-transferase (360 aa).

A run of 10 helical transmembrane segments spans residues 26 to 46 (AIMS…RLIA), 70 to 90 (GTPT…ALLW), 94 to 114 (SNPY…VGFV), 132 to 152 (WKYF…YMHG), 168 to 188 (VMPQ…VGTS), 199 to 219 (GLAI…AWAT), 239 to 259 (LVVL…FNTY), 263 to 283 (VFMG…IAVL), 288 to 308 (LLLV…ILQV), and 338 to 358 (VIVR…ATLK).

Belongs to the glycosyltransferase 4 family. MraY subfamily. Mg(2+) serves as cofactor.

It localises to the cell inner membrane. The catalysed reaction is UDP-N-acetyl-alpha-D-muramoyl-L-alanyl-gamma-D-glutamyl-meso-2,6-diaminopimeloyl-D-alanyl-D-alanine + di-trans,octa-cis-undecaprenyl phosphate = di-trans,octa-cis-undecaprenyl diphospho-N-acetyl-alpha-D-muramoyl-L-alanyl-D-glutamyl-meso-2,6-diaminopimeloyl-D-alanyl-D-alanine + UMP. Its pathway is cell wall biogenesis; peptidoglycan biosynthesis. Catalyzes the initial step of the lipid cycle reactions in the biosynthesis of the cell wall peptidoglycan: transfers peptidoglycan precursor phospho-MurNAc-pentapeptide from UDP-MurNAc-pentapeptide onto the lipid carrier undecaprenyl phosphate, yielding undecaprenyl-pyrophosphoryl-MurNAc-pentapeptide, known as lipid I. The protein is Phospho-N-acetylmuramoyl-pentapeptide-transferase of Photobacterium profundum (strain SS9).